The sequence spans 338 residues: Glycerol-3-phosphate dehydrogenase [NAD(P)+] (338 aa).

The NADPH site is built by Ser-13, Trp-14, and Lys-108. Positions 108, 139, and 141 each coordinate sn-glycerol 3-phosphate. Ala-143 serves as a coordination point for NADPH. 5 residues coordinate sn-glycerol 3-phosphate: Lys-194, Asp-247, Ser-257, Arg-258, and Asn-259. The active-site Proton acceptor is Lys-194. Arg-258 contacts NADPH. The NADPH site is built by Val-282 and Glu-284.

It belongs to the NAD-dependent glycerol-3-phosphate dehydrogenase family.

It localises to the cytoplasm. It carries out the reaction sn-glycerol 3-phosphate + NAD(+) = dihydroxyacetone phosphate + NADH + H(+). It catalyses the reaction sn-glycerol 3-phosphate + NADP(+) = dihydroxyacetone phosphate + NADPH + H(+). It functions in the pathway membrane lipid metabolism; glycerophospholipid metabolism. Its function is as follows. Catalyzes the reduction of the glycolytic intermediate dihydroxyacetone phosphate (DHAP) to sn-glycerol 3-phosphate (G3P), the key precursor for phospholipid synthesis. The chain is Glycerol-3-phosphate dehydrogenase [NAD(P)+] from Streptococcus agalactiae serotype III (strain NEM316).